The chain runs to 443 residues: ATP-dependent protease ATPase subunit HslU (443 aa).

Residues I18 and 60 to 65 (GVGKTE) each bind ATP. A disordered region spans residues 139–161 (ARDSGFDANPSEENNATRQKFRK). ATP is bound by residues D256, E321, and R393.

The protein belongs to the ClpX chaperone family. HslU subfamily. A double ring-shaped homohexamer of HslV is capped on each side by a ring-shaped HslU homohexamer. The assembly of the HslU/HslV complex is dependent on binding of ATP.

Its subcellular location is the cytoplasm. ATPase subunit of a proteasome-like degradation complex; this subunit has chaperone activity. The binding of ATP and its subsequent hydrolysis by HslU are essential for unfolding of protein substrates subsequently hydrolyzed by HslV. HslU recognizes the N-terminal part of its protein substrates and unfolds these before they are guided to HslV for hydrolysis. The chain is ATP-dependent protease ATPase subunit HslU from Nitrosomonas eutropha (strain DSM 101675 / C91 / Nm57).